We begin with the raw amino-acid sequence, 438 residues long: MFLPQEFIRRKRDGQPLDRDGMAAFVRGVTDGSVTEGQVAAFAMAVYFNDLSTDERVALTLAQRDSGDVLDWRALDLDGPVIDKHSTGGVGDVVSLMLGPMVAACGGYVPMISGRGLGHTGGTLDKLSAIPGYDVMPATDAFRRTVREVGVAIIGQTARLAPADKRIYAIRDVTATVESVAMITASILSKKLAAGLDGLVMDVKVGSGAFMPTAEKSAELARSIVDVGNGAGMKTTAILTDMNQSLAPCAGNALEVACAIDYLTGKSRPARLHDVTMALSAELLVTGGLARDVGHAREKLQQALDSGAAAERFARMVVALGGPADLLDAPARHLARAVVIVPVPAPASGVVQRVDCRALGLAVVALGGGRTRAEDAIDVSVGLSALAEIGQRVEAGEPLGFVHARDEATAAHAADAIRRGYVLGDTGEAPPTLYQRVD.

This sequence belongs to the thymidine/pyrimidine-nucleoside phosphorylase family. Homodimer.

The catalysed reaction is thymidine + phosphate = 2-deoxy-alpha-D-ribose 1-phosphate + thymine. Its pathway is pyrimidine metabolism; dTMP biosynthesis via salvage pathway; dTMP from thymine: step 1/2. Functionally, the enzymes which catalyze the reversible phosphorolysis of pyrimidine nucleosides are involved in the degradation of these compounds and in their utilization as carbon and energy sources, or in the rescue of pyrimidine bases for nucleotide synthesis. The chain is Thymidine phosphorylase from Burkholderia cenocepacia (strain ATCC BAA-245 / DSM 16553 / LMG 16656 / NCTC 13227 / J2315 / CF5610) (Burkholderia cepacia (strain J2315)).